We begin with the raw amino-acid sequence, 120 residues long: Ribosomal protein eL22-like 1 (120 aa).

Belongs to the eukaryotic ribosomal protein eL22 family.

The protein is Ribosomal protein eL22-like 1 (rpl22l1) of Xenopus tropicalis (Western clawed frog).